A 356-amino-acid chain; its full sequence is Carbohydrate sulfotransferase 10 (356 aa).

The Cytoplasmic portion of the chain corresponds to 1 to 6 (MHHQWL). The helical; Signal-anchor for type II membrane protein transmembrane segment at 7–27 (LLAACFWVIFMFMVASKFITL) threads the bilayer. At 28 to 356 (TFKDPDVYSA…GYQKPDFLLN (329 aa)) the chain is on the lumenal side. Asparagine 99 is a glycosylation site (N-linked (GlcNAc...) asparagine). Residues 127 to 133 (PKVGNTQ) and 189 to 197 (RDPFERLIS) contribute to the 3'-phosphoadenylyl sulfate site. Asparagine 228 and asparagine 316 each carry an N-linked (GlcNAc...) asparagine glycan.

Belongs to the sulfotransferase 2 family.

It localises to the golgi apparatus membrane. It catalyses the reaction 3-O-{beta-D-GlcA-(1-&gt;[3)-alpha-D-Xyl-(1-&gt;3)-beta-D-GlcA-(1-&gt;](n)-4)-beta-D-Xyl-(1-&gt;4)-Rib-ol-P-Rib-ol-P-3-beta-D-GalNAc-(1-&gt;3)-beta-D-GlcNAc-(1-&gt;4)-O-6-P-alpha-D-Man}-L-Thr-[protein] + 3'-phosphoadenylyl sulfate = 3-O-{O-3-S-beta-D-GlcA-(1-&gt;[3)-alpha-D-Xyl-(1-&gt;3)-beta-D-GlcA-(1-&gt;](n)-4)-beta-D-Xyl-(1-&gt;4)-Rib-ol-P-Rib-ol-P-3-beta-D-GalNAc-(1-&gt;3)-beta-D-GlcNAc-(1-&gt;4)-O-6-P-alpha-D-Man}-L-Thr-[protein] + adenosine 3',5'-bisphosphate + H(+). The enzyme catalyses 17beta-estradiol 3-O-(beta-D-glucuronate) + 3'-phosphoadenylyl sulfate = 17beta-estradiol 3-O-(3-sulfo-beta-D-glucuronate) + adenosine 3',5'-bisphosphate + H(+). It carries out the reaction 17beta-estradiol 3-O-(beta-D-glucuronate) 17-sulfate + 3'-phosphoadenylyl sulfate = 17beta-estradiol 3-O-(3-sulfo-beta-D-glucuronate) 17-sulfate + adenosine 3',5'-bisphosphate + H(+). The catalysed reaction is 17beta-estradiol 17-O-(beta-D-glucuronate) + 3'-phosphoadenylyl sulfate = 17beta-estradiol 17-O-(3-sulfo-beta-D-glucuronate) + adenosine 3',5'-bisphosphate + H(+). It catalyses the reaction 16alpha,17beta-estriol 3-O-(beta-D-glucuronate) + 3'-phosphoadenylyl sulfate = 16alpha,17beta-estriol 3-O-(3-sulfo-beta-D-glucuronate) + adenosine 3',5'-bisphosphate + H(+). The enzyme catalyses 16alpha,17beta-estriol 16-O-(beta-D-glucuronate) + 3'-phosphoadenylyl sulfate = 16alpha,17beta-estriol 16-O-(3-sulfo-beta-D-glucuronate) + adenosine 3',5'-bisphosphate + H(+). It carries out the reaction 16alpha,17beta-estriol 17-O-(beta-D-glucuronate) + 3'-phosphoadenylyl sulfate = 16alpha,17beta-estriol 17-O-(3-sulfo-beta-D-glucuronate) + adenosine 3',5'-bisphosphate + H(+). The catalysed reaction is estrone 3-O-(beta-D-glucuronate) + 3'-phosphoadenylyl sulfate = estrone 3-O-(3-sulfo-beta-D-glucuronate) + adenosine 3',5'-bisphosphate + H(+). It catalyses the reaction 3alpha,20alpha-dihydroxy-5beta-pregnane 3-O-(beta-D-glucuronate) + 3'-phosphoadenylyl sulfate = 3alpha,20alpha-dihydroxy-5beta-pregnane 3-O-(3-sulfo-beta-D-glucuronate) + adenosine 3',5'-bisphosphate + H(+). The enzyme catalyses testosterone 17-O-(beta-D-glucuronate) + 3'-phosphoadenylyl sulfate = testosterone 17-O-(3-sulfo-beta-D-glucuronate) + adenosine 3',5'-bisphosphate + H(+). It carries out the reaction 3beta-androst-5-en-17-one 3-O-(beta-D-glucuronate) + 3'-phosphoadenylyl sulfate = 3beta-androst-5-en-17-one 3-O-(3-sulfo-beta-D-glucuronate) + adenosine 3',5'-bisphosphate + H(+). The catalysed reaction is 3alpha,17alpha-dihydroxy-5beta-androstane-11-one-17beta-carboxylate 3-O-(beta-D-glucuronate) + 3'-phosphoadenylyl sulfate = 3alpha,17alpha-dihydroxy-5beta-androstane-11-one-17beta-carboxylate 3-O-(3-sulfo-beta-D-glucuronate) + adenosine 3',5'-bisphosphate + H(+). It catalyses the reaction 3alpha-hydroxyetiocholan-17-one 3-O-(beta-D-glucuronate) + 3'-phosphoadenylyl sulfate = 3alpha-hydroxyetiocholan-17-one 3-O-(3-sulfo-beta-D-glucuronate) + adenosine 3',5'-bisphosphate + H(+). Its pathway is steroid metabolism. The protein operates within protein modification; carbohydrate sulfation. In terms of biological role, catalyzes the transfer of sulfate from 3'-phosphoadenylyl sulfate (PAPS) to position 3 of terminal glucuronic acid of both protein- and lipid-linked oligosaccharides. Participates in biosynthesis of HNK-1 carbohydrate structure 3-O-sulfo-beta-D-GlcA-(1-&gt;3)-beta-D-Gal-(1-&gt;4)-D-GlcNAc-R, a sulfated glucuronyl-lactosaminyl residue carried by many neural recognition molecules, which is involved in cell interactions during ontogenetic development and in synaptic plasticity in the adult. May be indirectly involved in synapse plasticity of the hippocampus, via its role in HNK-1 biosynthesis. Sulfates terminal glucuronyl residue of the laminin globular (LG)-domain binding epitope on DAG1/alpha-dystroglycan and prevents further polymerization by LARGE1 glycosyltransferase. Likely defines the chain length of LG epitope, conferring binding specificity to extracellular matrix components. Plays a role in down-regulating the steroid hormones. Sulfates glucuronidated estrogens and androgens with an impact in hormone cycle and fertility. Has a preference for glucuronyl moiety at the 3-hydroxyl group of a sterol ring rather than the 17-hydroxyl group, showing high catalytic efficiency for 17beta-estradiol 3-O-(beta-D-glucuronate) and dehydroepiandrosterone 3-O-(beta-D-glucuronate) hormones. This Pongo abelii (Sumatran orangutan) protein is Carbohydrate sulfotransferase 10 (CHST10).